The sequence spans 367 residues: Cyclic AMP-responsive element-binding protein 3-like protein 4 (367 aa).

The segment at Met1 to Asn52 is required for transcriptional activation. Residues Met1–Ser267 lie on the Cytoplasmic side of the membrane. The tract at residues Glu58 to Ser81 is disordered. Residues Ile189–Leu252 enclose the bZIP domain. The basic motif stretch occupies residues Lys191–Lys230. Residues Leu231–Leu252 are leucine-zipper. A helical; Signal-anchor for type II membrane protein transmembrane segment spans residues Thr268–Phe288. Over Gln289–Met367 the chain is Lumenal. A glycan (N-linked (GlcNAc...) asparagine) is linked at Asn338.

It belongs to the bZIP family. ATF subfamily. In terms of assembly, binds DNA as a dimer. Forms a heterodimer with CREM isoform Delta. Controlled by regulated intramembrane proteolysis (RIP). Following ER stress a fragment containing the cytoplasmic transcription factor domain is released by proteolysis. The cleavage seems to be performed sequentially by site-1 and site-2 proteases (PS1 and PS2). PS1 cleavage may be suppressed by a determinant in the C-terminal region.

It is found in the endoplasmic reticulum membrane. The protein localises to the nucleus. Its function is as follows. Transcriptional activator that may play a role in the unfolded protein response. Binds to the UPR element (UPRE) but not to CRE element. Preferentially binds DNA with to the consensus sequence 5'-T[GT]ACGT[GA][GT]-3' and has transcriptional activation activity from UPRE. Binds to NF-kappa-B site and has transcriptional activation activity from NF-kappa-B-containing regulatory elements. Increases the binding of CREM isoform Delta with CRE. The CREM isoform Delta-CREB3L4 heterodimer functions through CRE but not through UPRE and may recruit HIRA to CRE to regulate histone exchange. In Rattus norvegicus (Rat), this protein is Cyclic AMP-responsive element-binding protein 3-like protein 4 (Creb3l4).